The chain runs to 485 residues: Glutamyl-tRNA(Gln) amidotransferase subunit A (485 aa).

Active-site charge relay system residues include Lys79 and Ser154. The active-site Acyl-ester intermediate is the Ser178.

This sequence belongs to the amidase family. GatA subfamily. In terms of assembly, heterotrimer of A, B and C subunits.

It catalyses the reaction L-glutamyl-tRNA(Gln) + L-glutamine + ATP + H2O = L-glutaminyl-tRNA(Gln) + L-glutamate + ADP + phosphate + H(+). Its function is as follows. Allows the formation of correctly charged Gln-tRNA(Gln) through the transamidation of misacylated Glu-tRNA(Gln) in organisms which lack glutaminyl-tRNA synthetase. The reaction takes place in the presence of glutamine and ATP through an activated gamma-phospho-Glu-tRNA(Gln). This is Glutamyl-tRNA(Gln) amidotransferase subunit A from Clostridium botulinum (strain ATCC 19397 / Type A).